Reading from the N-terminus, the 85-residue chain is uncharacterized protein (85 aa).

This sequence belongs to the ycf76 family.

The protein resides in the plastid. The protein localises to the chloroplast. This is an uncharacterized protein from Zea mays (Maize).